A 409-amino-acid polypeptide reads, in one-letter code: AP-1-like transcription factor YAP2 (409 aa).

2 short sequence motifs (bipartite nuclear localization signal) span residues 17–24 (MKKQMLLN) and 47–54 (SRRTAQNR). A disordered region spans residues 26–64 (DGTPKRKVGRPGRKRIDSEAKSRRTAQNRAAQRAFRDRK). One can recognise a bZIP domain in the interval 43–106 (SEAKSRRTAQ…KSLLSEITKY (64 aa)). Residues 46 to 69 (KSRRTAQNRAAQRAFRDRKEAKMK) form a basic motif region. The segment at 71–99 (LQERVELLEQKDAQNKTTTDFLLCSLKSL) is leucine-zipper. The disordered stretch occupies residues 127 to 156 (QKRENEKGTSTAVSKAAKELPSPNSDENMT). Residues 356 to 387 (CYHILEEISSLPKYSSLDIDDLCSELIIKAKC) are c-CRD. The Nuclear export signal motif lies at 372 to 379 (LDIDDLCS).

It belongs to the bZIP family. YAP subfamily. As to quaternary structure, homodimer; disulfide-linked, upon oxidation. Interacts in the nucleus with the nuclear export protein CRM1. Interacts with RCK1. In terms of processing, depending on the oxidative stress inducing agent, CAD1/YAP2 can undergo two distinct conformational changes, both through oxidation of cysteine residues, and both masking the nuclear export signal, thus abolishing nuclear export by CRM1/exportin 1. Peroxide stress induces the formation of possible intramolecular disulfide bonds as well as intermolcular disulfide within a homodimer. Cadmium may bind directly to specific cysteine residues (Cys-391 and either Cys-356 or Cys-387) in the c-CRD.

It is found in the cytoplasm. Its subcellular location is the nucleus. Functionally, transcription activator involved in oxidative stress response and cadmium resistance. Regulates the transcription of genes overrepresented for the function of stabilizing proteins including the inducible Hsp90-family protein HSP82. Preferentially binds to promoters with the core binding site 5'-TTA[CG]TAA-3'. Activity of the transcription factor is controlled through oxidation of specific cysteine residues resulting in the alteration of its subcellular location. Activation by alkyl hydroperoxides or cadmium induces nuclear accumulation and as a result CAD1/YAP2 transcriptional activity. The protein is AP-1-like transcription factor YAP2 of Saccharomyces cerevisiae (strain ATCC 204508 / S288c) (Baker's yeast).